We begin with the raw amino-acid sequence, 680 residues long: Conserved oligomeric Golgi complex subunit 6 (680 aa).

The tract at residues 479-517 (HKSKKSGQLPRRSRTSSDSSQLTSVDALLSSSPSPPQNN) is disordered.

It belongs to the COG6 family. As to quaternary structure, component of the conserved oligomeric Golgi complex which is composed of eight different subunits and is required for normal Golgi morphology and localization. Interacts with COG5, COG7 and COG8.

It localises to the golgi apparatus membrane. Functionally, required for normal Golgi function. The sequence is that of Conserved oligomeric Golgi complex subunit 6 from Arabidopsis thaliana (Mouse-ear cress).